The chain runs to 732 residues: uncharacterized protein (732 aa).

A disordered region spans residues 145 to 207; that stretch reads ETLRDSVINP…RRRPEMASPH (63 aa). Positions 170–179 are enriched in basic and acidic residues; that stretch reads KGHETLERGS. Positions 176 to 524 constitute a Reverse transcriptase domain; that stretch reads ERGSKALGPE…KKIPFLGYLI (349 aa).

The protein localises to the mitochondrion. This is an uncharacterized protein from Marchantia polymorpha (Common liverwort).